Consider the following 203-residue polypeptide: Thymidine kinase (203 aa).

ATP is bound by residues 9–16 (ATMNAGKT) and 87–90 (DEAQ). Glutamate 88 (proton acceptor) is an active-site residue. 4 residues coordinate Zn(2+): cysteine 145, cysteine 147, cysteine 181, and histidine 184.

This sequence belongs to the thymidine kinase family. Homotetramer.

It is found in the cytoplasm. The catalysed reaction is thymidine + ATP = dTMP + ADP + H(+). The protein is Thymidine kinase of Mesorhizobium japonicum (strain LMG 29417 / CECT 9101 / MAFF 303099) (Mesorhizobium loti (strain MAFF 303099)).